The sequence spans 301 residues: ATP synthase gamma chain (301 aa).

Belongs to the ATPase gamma chain family. F-type ATPases have 2 components, CF(1) - the catalytic core - and CF(0) - the membrane proton channel. CF(1) has five subunits: alpha(3), beta(3), gamma(1), delta(1), epsilon(1). CF(0) has three main subunits: a, b and c.

The protein localises to the cell inner membrane. Produces ATP from ADP in the presence of a proton gradient across the membrane. The gamma chain is believed to be important in regulating ATPase activity and the flow of protons through the CF(0) complex. The protein is ATP synthase gamma chain of Helicobacter pylori (strain ATCC 700392 / 26695) (Campylobacter pylori).